Consider the following 486-residue polypeptide: Secreted protein C (486 aa).

Positions 1–22 (MKINIILLFVGLILAFAVLSNA) are cleaved as a signal peptide. Residues 30–332 (GVNPFDNNNS…SGSHGGSSSH (303 aa)) are disordered. Asn37 carries N-linked (GlcNAc...) asparagine glycosylation. Residues 41–60 (SGSGSGSGGGSSSSGSGTGQ) show a composition bias toward gly residues. The span at 61 to 318 (SSGTVSSSGS…TGSSEYSSSS (258 aa)) shows a compositional bias: low complexity. N-linked (GlcNAc...) asparagine glycans are attached at residues Asn73, Asn74, Asn83, Asn112, Asn129, Asn149, and Asn174.

Belongs to the Sct family.

The protein resides in the secreted. The polypeptide is Secreted protein C (Dictyostelium discoideum (Social amoeba)).